A 431-amino-acid chain; its full sequence is Serine/threonine-protein kinase Sgk1 (431 aa).

A necessary for localization to the mitochondria region spans residues 1–60 (MTVKTEAARGPLTYSRMRGMVAILIAFMKQRRMGLNDFIQKIANNSYACKHTEVQSILKI). Residues 66 to 92 (PELMNANPSPPPSPSQQINLGPSSNPH) are disordered. Position 74 is a phosphoserine (S74). S78 bears the Phosphoserine; by MAPK7 mark. The span at 81 to 91 (QQINLGPSSNP) shows a compositional bias: polar residues. In terms of domain architecture, Protein kinase spans 98 to 355 (FHFLKVIGKG…FMEIRNHVFF (258 aa)). Residues 104-112 (IGKGSFGKV) and K127 contribute to the ATP site. Residues 131–141 (KKAILKKKEEK) carry the Nuclear localization signal motif. D222 (proton acceptor) is an active-site residue. T256 is modified (phosphothreonine; by PDPK1). One can recognise an AGC-kinase C-terminal domain in the interval 356–431 (SLINWDDLIN…SYAPPMDSFL (76 aa)). At T369 the chain carries Phosphothreonine; by PKA. A phosphoserine mark is found at S397, S401, and S422.

It belongs to the protein kinase superfamily. AGC Ser/Thr protein kinase family. Homodimer; disulfide-linked. Forms a trimeric complex with FBXW7 and NOTCH1. Interacts with MAPK3/ERK1, MAPK1/ERK2, MAP2K1/MEK1, MAP2K2/MEK2, NEDD4, NEDD4L, MAPT/TAU, MAPK7, CREB1, SLC9A3R2/NHERF2 and KCNJ1/ROMK1. Associates with the mammalian target of rapamycin complex 2 (mTORC2) via an interaction with MAPKAP1/SIN1. In terms of processing, regulated by phosphorylation. Activated by phosphorylation on Ser-422 by mTORC2, transforming it into a substrate for PDPK1 which phosphorylates it on Thr-256. Phosphorylation on Ser-397 and Ser-401 are also essential for its activity. Phosphorylation on Ser-78 by MAPK7 is required for growth factor-induced cell cycle progression. Ubiquitinated by NEDD4L; which promotes proteasomal degradation. Ubiquitinated by SYVN1 at the endoplasmic reticulum; which promotes rapid proteasomal degradation and maintains a high turnover rate in resting cells.

The protein localises to the cytoplasm. Its subcellular location is the nucleus. It is found in the endoplasmic reticulum membrane. It localises to the cell membrane. The protein resides in the mitochondrion. It catalyses the reaction L-seryl-[protein] + ATP = O-phospho-L-seryl-[protein] + ADP + H(+). The catalysed reaction is L-threonyl-[protein] + ATP = O-phospho-L-threonyl-[protein] + ADP + H(+). With respect to regulation, two specific sites, one in the kinase domain (Thr-256) and the other in the C-terminal regulatory region (Ser-422), need to be phosphorylated for its full activation. Phosphorylation at Ser-397 and Ser-401 are also essential for its activity. Activated by WNK1, WNK2, WNK3 and WNK4; which promote phosphorylation by mTORC2. In terms of biological role, serine/threonine-protein kinase which is involved in the regulation of a wide variety of ion channels, membrane transporters, cellular enzymes, transcription factors, neuronal excitability, cell growth, proliferation, survival, migration and apoptosis. Plays an important role in cellular stress response. Contributes to regulation of renal Na(+) retention, renal K(+) elimination, salt appetite, gastric acid secretion, intestinal Na(+)/H(+) exchange and nutrient transport, insulin-dependent salt sensitivity of blood pressure, salt sensitivity of peripheral glucose uptake, cardiac repolarization and memory consolidation. Up-regulates Na(+) channels: SCNN1A/ENAC, SCN5A and ASIC1/ACCN2, K(+) channels: KCNJ1/ROMK1, KCNA1-5, KCNQ1-5 and KCNE1, epithelial Ca(2+) channels: TRPV5 and TRPV6, chloride channels: BSND, CLCN2 and CFTR, glutamate transporters: SLC1A3/EAAT1, SLC1A2 /EAAT2, SLC1A1/EAAT3, SLC1A6/EAAT4 and SLC1A7/EAAT5, amino acid transporters: SLC1A5/ASCT2, SLC38A1/SN1 and SLC6A19, creatine transporter: SLC6A8, Na(+)/dicarboxylate cotransporter: SLC13A2/NADC1, Na(+)-dependent phosphate cotransporter: SLC34A2/NAPI-2B, glutamate receptor: GRIK2/GLUR6. Up-regulates carriers: SLC9A3/NHE3, SLC12A1/NKCC2, SLC12A3/NCC, SLC5A3/SMIT, SLC2A1/GLUT1, SLC5A1/SGLT1 and SLC15A2/PEPT2. Regulates enzymes: GSK3A/B, PMM2 and Na(+)/K(+) ATPase, and transcription factors: CTNNB1 and nuclear factor NF-kappa-B. Stimulates sodium transport into epithelial cells by enhancing the stability and expression of SCNN1A/ENAC. This is achieved by phosphorylating the NEDD4L ubiquitin E3 ligase, promoting its interaction with 14-3-3 proteins, thereby preventing it from binding to SCNN1A/ENAC and targeting it for degradation. Regulates store-operated Ca(+2) entry (SOCE) by stimulating ORAI1 and STIM1. Regulates KCNJ1/ROMK1 directly via its phosphorylation or indirectly via increased interaction with SLC9A3R2/NHERF2. Phosphorylates MDM2 and activates MDM2-dependent ubiquitination of p53/TP53. Phosphorylates MAPT/TAU and mediates microtubule depolymerization and neurite formation in hippocampal neurons. Phosphorylates SLC2A4/GLUT4 and up-regulates its activity. Phosphorylates APBB1/FE65 and promotes its localization to the nucleus. Phosphorylates MAPK1/ERK2 and activates it by enhancing its interaction with MAP2K1/MEK1 and MAP2K2/MEK2. Phosphorylates FBXW7 and plays an inhibitory role in the NOTCH1 signaling. Phosphorylates FOXO1 resulting in its relocalization from the nucleus to the cytoplasm. Phosphorylates FOXO3, promoting its exit from the nucleus and interference with FOXO3-dependent transcription. Phosphorylates BRAF and MAP3K3/MEKK3 and inhibits their activity. Phosphorylates SLC9A3/NHE3 in response to dexamethasone, resulting in its activation and increased localization at the cell membrane. Phosphorylates CREB1. Necessary for vascular remodeling during angiogenesis. This Oryctolagus cuniculus (Rabbit) protein is Serine/threonine-protein kinase Sgk1 (SGK1).